A 749-amino-acid polypeptide reads, in one-letter code: Replication restart protein PriA (749 aa).

The Helicase ATP-binding domain occupies 224-391 (SLKTSQFHTH…LSGKYVLSRL (168 aa)). 237 to 244 (GITGSGKT) contributes to the ATP binding site. Positions 333 to 336 (DEEH) match the DEAH box motif. The Zn(2+) site is built by C454, C457, C463, C466, C481, C484, C495, and C498. The 169-residue stretch at 490 to 658 (DLPQSCPKCL…EYPPFIRLIR (169 aa)) folds into the Helicase C-terminal domain.

The protein belongs to the helicase family. PriA subfamily. In terms of assembly, component of the replication restart primosome. Requires Zn(2+) as cofactor.

It carries out the reaction Couples ATP hydrolysis with the unwinding of duplex DNA by translocating in the 3'-5' direction.. The catalysed reaction is ATP + H2O = ADP + phosphate + H(+). Its function is as follows. Initiates the restart of stalled replication forks, which reloads the replicative helicase on sites other than the origin of replication. Recognizes and binds to abandoned replication forks and remodels them to uncover a helicase loading site. Promotes assembly of the primosome at these replication forks. This Chlamydia pneumoniae (Chlamydophila pneumoniae) protein is Replication restart protein PriA.